A 151-amino-acid polypeptide reads, in one-letter code: 6,7-dimethyl-8-ribityllumazine synthase (151 aa).

5-amino-6-(D-ribitylamino)uracil is bound by residues Phe-23, 55 to 57 (AYE), and 79 to 81 (AVI). 84 to 85 (AT) is a (2S)-2-hydroxy-3-oxobutyl phosphate binding site. Catalysis depends on His-87, which acts as the Proton donor. Phe-111 is a binding site for 5-amino-6-(D-ribitylamino)uracil. (2S)-2-hydroxy-3-oxobutyl phosphate is bound at residue Arg-125.

It belongs to the DMRL synthase family.

The enzyme catalyses (2S)-2-hydroxy-3-oxobutyl phosphate + 5-amino-6-(D-ribitylamino)uracil = 6,7-dimethyl-8-(1-D-ribityl)lumazine + phosphate + 2 H2O + H(+). The protein operates within cofactor biosynthesis; riboflavin biosynthesis; riboflavin from 2-hydroxy-3-oxobutyl phosphate and 5-amino-6-(D-ribitylamino)uracil: step 1/2. In terms of biological role, catalyzes the formation of 6,7-dimethyl-8-ribityllumazine by condensation of 5-amino-6-(D-ribitylamino)uracil with 3,4-dihydroxy-2-butanone 4-phosphate. This is the penultimate step in the biosynthesis of riboflavin. The sequence is that of 6,7-dimethyl-8-ribityllumazine synthase from Leptospira interrogans serogroup Icterohaemorrhagiae serovar copenhageni (strain Fiocruz L1-130).